A 540-amino-acid chain; its full sequence is Chaperonin GroEL (540 aa).

Residues 29–32, 86–90, glycine 413, 476–478, and aspartate 492 contribute to the ATP site; these read TLGP, DGTTT, and NAA.

Belongs to the chaperonin (HSP60) family. In terms of assembly, forms a cylinder of 14 subunits composed of two heptameric rings stacked back-to-back. Interacts with the co-chaperonin GroES.

It localises to the cytoplasm. The enzyme catalyses ATP + H2O + a folded polypeptide = ADP + phosphate + an unfolded polypeptide.. Together with its co-chaperonin GroES, plays an essential role in assisting protein folding. The GroEL-GroES system forms a nano-cage that allows encapsulation of the non-native substrate proteins and provides a physical environment optimized to promote and accelerate protein folding. The polypeptide is Chaperonin GroEL (Streptococcus pneumoniae (strain P1031)).